A 216-amino-acid polypeptide reads, in one-letter code: Thiamine-phosphate synthase (216 aa).

4-amino-2-methyl-5-(diphosphooxymethyl)pyrimidine is bound by residues 41-45 and N73; that span reads QYREK. Mg(2+) contacts are provided by D74 and D93. S111 contacts 4-amino-2-methyl-5-(diphosphooxymethyl)pyrimidine. 137–139 contributes to the 2-[(2R,5Z)-2-carboxy-4-methylthiazol-5(2H)-ylidene]ethyl phosphate binding site; that stretch reads TTT. K140 contributes to the 4-amino-2-methyl-5-(diphosphooxymethyl)pyrimidine binding site. 2-[(2R,5Z)-2-carboxy-4-methylthiazol-5(2H)-ylidene]ethyl phosphate-binding positions include G168 and 188–189; that span reads VS.

It belongs to the thiamine-phosphate synthase family. Requires Mg(2+) as cofactor.

It carries out the reaction 2-[(2R,5Z)-2-carboxy-4-methylthiazol-5(2H)-ylidene]ethyl phosphate + 4-amino-2-methyl-5-(diphosphooxymethyl)pyrimidine + 2 H(+) = thiamine phosphate + CO2 + diphosphate. The enzyme catalyses 2-(2-carboxy-4-methylthiazol-5-yl)ethyl phosphate + 4-amino-2-methyl-5-(diphosphooxymethyl)pyrimidine + 2 H(+) = thiamine phosphate + CO2 + diphosphate. The catalysed reaction is 4-methyl-5-(2-phosphooxyethyl)-thiazole + 4-amino-2-methyl-5-(diphosphooxymethyl)pyrimidine + H(+) = thiamine phosphate + diphosphate. It participates in cofactor biosynthesis; thiamine diphosphate biosynthesis; thiamine phosphate from 4-amino-2-methyl-5-diphosphomethylpyrimidine and 4-methyl-5-(2-phosphoethyl)-thiazole: step 1/1. In terms of biological role, condenses 4-methyl-5-(beta-hydroxyethyl)thiazole monophosphate (THZ-P) and 2-methyl-4-amino-5-hydroxymethyl pyrimidine pyrophosphate (HMP-PP) to form thiamine monophosphate (TMP). The polypeptide is Thiamine-phosphate synthase (Chloroflexus aurantiacus (strain ATCC 29366 / DSM 635 / J-10-fl)).